The primary structure comprises 178 residues: Fatty-acid and retinol-binding protein 1 (178 aa).

The first 16 residues, 1–16 (MYHRLILLALVGTTMA), serve as a signal peptide directing secretion. 2 coiled-coil regions span residues 67–89 (DAAL…ELRN) and 130–153 (KQAA…ELKV).

The protein belongs to the fatty-acid and retinol-binding protein (FARBP) family. In terms of processing, not glycosylated.

The protein resides in the secreted. Functionally, binds retinol. Also binds the fluorescent fatty acid 11-((5-dimethylaminonaphthalene-1-sulfonyl)amino)undecanoic acid (DAUDA). The long chain fatty acid oleic acid can act competitively to displace bound DAUDA and retinol. The protein is Fatty-acid and retinol-binding protein 1 of Brugia malayi (Filarial nematode worm).